Consider the following 636-residue polypeptide: MGKSIGIDLGTTNSCVAVLEGGDPVVIPNAEGERTTPSVVAFDRKSGERLVGQLARRQAVTNPERTVYSIKRFMGRRYNDVKQEAERVGYQVVPGPHGDVRVRLGDKDYSPPEISAMILQKLKRDAEDYLGEEVTDAVITVPAYFEDAQRQATKDAGRIAGLNVKRIINEPTAAALAYGLDKENDQTILVFDLGGGTFDVSILELGDGVFEVKATSGNNHLGGDDFDAKVVEWIVEEFKKAEGIDLSRDKMAMQRLVEAAEKAKKELSSTTSTNINLPFITADANGPKHLDLTLTRAQFNKLTADLVEATAGPVRQAMQDAGLKPGDVDQVILVGGSTRIPAVQEKVKELTGKEPHKGINPDEVVAIGAAIQAGVLAGEVKDVLLLDVTPLSLGIETKGGVFTKLIERNTTIPTRKSEIFTTAEDNQQSVEIKVYQGEREIAAHNKLIGNFQLVGIPPAPRGVPQIEVTFDIDANGILNVGAKDLGTGKEQKITITASSGLSDQEIEQMVRDAEAHAEEDRRKREEAEIRNNADNLVYSVERSLKEVDGKVDSSTREEIEKAIKEAKEALAGDDIEEIKRKQEALMSASHKLSQVLYQQAQEQQQSGSSGGSSDEDVVEDAEIVDEEDEEKRDDNR.

Thr197 is subject to Phosphothreonine; by autocatalysis. Residues 596–607 (LYQQAQEQQQSG) are compositionally biased toward low complexity. The segment at 596–636 (LYQQAQEQQQSGSSGGSSDEDVVEDAEIVDEEDEEKRDDNR) is disordered. Residues 613-636 (SDEDVVEDAEIVDEEDEEKRDDNR) are compositionally biased toward acidic residues.

This sequence belongs to the heat shock protein 70 family.

Its function is as follows. Acts as a chaperone. This chain is Chaperone protein DnaK, found in Rubrobacter xylanophilus (strain DSM 9941 / JCM 11954 / NBRC 16129 / PRD-1).